Here is a 208-residue protein sequence, read N- to C-terminus: Imidazoleglycerol-phosphate dehydratase (208 aa).

Residues 1–22 are disordered; the sequence is MTEDTETSSTGAGADDRTAAIS.

The protein belongs to the imidazoleglycerol-phosphate dehydratase family.

It is found in the cytoplasm. It carries out the reaction D-erythro-1-(imidazol-4-yl)glycerol 3-phosphate = 3-(imidazol-4-yl)-2-oxopropyl phosphate + H2O. The protein operates within amino-acid biosynthesis; L-histidine biosynthesis; L-histidine from 5-phospho-alpha-D-ribose 1-diphosphate: step 6/9. The chain is Imidazoleglycerol-phosphate dehydratase from Haloquadratum walsbyi (strain DSM 16790 / HBSQ001).